Reading from the N-terminus, the 159-residue chain is Transcriptional repressor NrdR (159 aa).

Residues 3-34 fold into a zinc finger; that stretch reads CPKCGYNKSSVVDSRQAEEGTTIRRRRECEKC. The ATP-cone domain occupies 49 to 139; that stretch reads LLVIKKDGTR…VYKSFKDVDE (91 aa).

The protein belongs to the NrdR family. It depends on Zn(2+) as a cofactor.

Negatively regulates transcription of bacterial ribonucleotide reductase nrd genes and operons by binding to NrdR-boxes. This Streptococcus agalactiae serotype Ia (strain ATCC 27591 / A909 / CDC SS700) protein is Transcriptional repressor NrdR.